The sequence spans 84 residues: Acyl carrier protein (84 aa).

The Carrier domain occupies 6–81; sequence EEILTGLAEI…DAVDYIANAT (76 aa). Serine 41 bears the O-(pantetheine 4'-phosphoryl)serine mark.

This sequence belongs to the acyl carrier protein (ACP) family. In terms of processing, 4'-phosphopantetheine is transferred from CoA to a specific serine of apo-ACP by AcpS. This modification is essential for activity because fatty acids are bound in thioester linkage to the sulfhydryl of the prosthetic group.

It is found in the cytoplasm. Its pathway is lipid metabolism; fatty acid biosynthesis. In terms of biological role, carrier of the growing fatty acid chain in fatty acid biosynthesis. The chain is Acyl carrier protein from Acidothermus cellulolyticus (strain ATCC 43068 / DSM 8971 / 11B).